The primary structure comprises 418 residues: MTLLALGINHKTAPVSLRERVSFSPDKLDQALDSLLAQPMVQGGVVLSTCNRTELYLSVEEQDNLQEALIRWLCDYHNLNEEDLRKSLYWHQDNDAVSHLMRVASGLDSLVLGEPQILGQVKKAFVDSQKGHMKASELERMFQKSFSVAKRVRTETDIGASAVSVAFAACTLARQIFESLSTVTVLLVGAGETIELVARHLREHKVQKMIIANRTRERAQILADEVGAEVIALSEIDERLREADIIISSTASPLPIIGKGMVERALKSRRNQPMLLVDIAVPRDVEPEVGKLANAYLYSVDDLQSIISHNLAQRKAAAVEAETIVAQETSEFMAWLRAQSASETIREYRSQAEHVRDELTAKALAALEQGGDAQAIMQDLAWKLTNRLIHAPTKSLQQAARDGDNERLNILRDSLGLE.

Residues 49-52 (TCNR), Ser109, 114-116 (EPQ), and Gln120 each bind substrate. The Nucleophile role is filled by Cys50. An NADP(+)-binding site is contributed by 189 to 194 (GAGETI).

The protein belongs to the glutamyl-tRNA reductase family. As to quaternary structure, homodimer.

The enzyme catalyses (S)-4-amino-5-oxopentanoate + tRNA(Glu) + NADP(+) = L-glutamyl-tRNA(Glu) + NADPH + H(+). It participates in porphyrin-containing compound metabolism; protoporphyrin-IX biosynthesis; 5-aminolevulinate from L-glutamyl-tRNA(Glu): step 1/2. In terms of biological role, catalyzes the NADPH-dependent reduction of glutamyl-tRNA(Glu) to glutamate 1-semialdehyde (GSA). This Shigella flexneri protein is Glutamyl-tRNA reductase.